The chain runs to 116 residues: Nucleoid-associated protein MLBr02330 (116 aa).

The disordered stretch occupies residues 96–116 (LTSAMRPTAPPPTPPTYMAGT).

The protein belongs to the YbaB/EbfC family. As to quaternary structure, homodimer.

The protein resides in the cytoplasm. It is found in the nucleoid. Its function is as follows. Binds to DNA and alters its conformation. May be involved in regulation of gene expression, nucleoid organization and DNA protection. The polypeptide is Nucleoid-associated protein MLBr02330 (Mycobacterium leprae (strain Br4923)).